The following is a 265-amino-acid chain: Glutamate 5-kinase (265 aa).

Lysine 15 serves as a coordination point for ATP. Substrate contacts are provided by serine 55, aspartate 142, and asparagine 158. Residues 178 to 179 (SD) and 220 to 226 (TGGMVTK) contribute to the ATP site.

The protein belongs to the glutamate 5-kinase family.

The protein resides in the cytoplasm. It catalyses the reaction L-glutamate + ATP = L-glutamyl 5-phosphate + ADP. The protein operates within amino-acid biosynthesis; L-proline biosynthesis; L-glutamate 5-semialdehyde from L-glutamate: step 1/2. In terms of biological role, catalyzes the transfer of a phosphate group to glutamate to form L-glutamate 5-phosphate. This is Glutamate 5-kinase from Lactiplantibacillus plantarum (strain ATCC BAA-793 / NCIMB 8826 / WCFS1) (Lactobacillus plantarum).